The primary structure comprises 264 residues: tRNA1(Val) (adenine(37)-N6)-methyltransferase (264 aa).

Belongs to the methyltransferase superfamily. tRNA (adenine-N(6)-)-methyltransferase family.

It localises to the cytoplasm. It catalyses the reaction adenosine(37) in tRNA1(Val) + S-adenosyl-L-methionine = N(6)-methyladenosine(37) in tRNA1(Val) + S-adenosyl-L-homocysteine + H(+). In terms of biological role, specifically methylates the adenine in position 37 of tRNA(1)(Val) (anticodon cmo5UAC). This chain is tRNA1(Val) (adenine(37)-N6)-methyltransferase, found in Shewanella pealeana (strain ATCC 700345 / ANG-SQ1).